Reading from the N-terminus, the 130-residue chain is Small ribosomal subunit protein uS9 (130 aa).

A disordered region spans residues 104–130 (LTRDPRMKERKKYGLKKARRAPQFSKR). The span at 111–130 (KERKKYGLKKARRAPQFSKR) shows a compositional bias: basic residues.

It belongs to the universal ribosomal protein uS9 family.

This Ruminiclostridium cellulolyticum (strain ATCC 35319 / DSM 5812 / JCM 6584 / H10) (Clostridium cellulolyticum) protein is Small ribosomal subunit protein uS9.